The following is a 469-amino-acid chain: Neuraminidase (469 aa).

The Intravirion segment spans residues 1–6; sequence MNPNQK. A helical transmembrane segment spans residues 7 to 27; the sequence is IITIGSICMVVGIISLILQIG. Residues 11–33 form an involved in apical transport and lipid raft association region; the sequence is GSICMVVGIISLILQIGNIISIW. Residues 28-469 are Virion surface-facing; sequence NIISIWVSHS…GAELPFTIDK (442 aa). The interval 36–90 is hypervariable stalk region; the sequence is HSIQTGNQNQPETCNQSIITYENNTWVNQTYVNISNTNFVAEQAVAPVALAGNSS. Residues Asn-50, Asn-58, Asn-63, Asn-68, and Asn-88 are each glycosylated (N-linked (GlcNAc...) asparagine; by host). The head of neuraminidase stretch occupies residues 91–469; the sequence is LCPISGWAIY…GAELPFTIDK (379 aa). Intrachain disulfides connect Cys-92/Cys-417, Cys-124/Cys-129, Cys-184/Cys-231, Cys-233/Cys-238, Cys-279/Cys-292, Cys-281/Cys-290, Cys-318/Cys-335, and Cys-421/Cys-446. Position 118 (Arg-118) interacts with substrate. Residue Asn-146 is glycosylated (N-linked (GlcNAc...) asparagine; by host). The active-site Proton donor/acceptor is the Asp-151. Arg-152 is a substrate binding site. An N-linked (GlcNAc...) asparagine; by host glycan is attached at Asn-235. Position 277 to 278 (277 to 278) interacts with substrate; the sequence is EE. Arg-293 lines the substrate pocket. Positions 294, 298, and 324 each coordinate Ca(2+). Arg-368 contributes to the substrate binding site. The active-site Nucleophile is Tyr-402.

The protein belongs to the glycosyl hydrolase 34 family. In terms of assembly, homotetramer. Ca(2+) is required as a cofactor. In terms of processing, N-glycosylated.

The protein localises to the virion membrane. It localises to the host apical cell membrane. It catalyses the reaction Hydrolysis of alpha-(2-&gt;3)-, alpha-(2-&gt;6)-, alpha-(2-&gt;8)- glycosidic linkages of terminal sialic acid residues in oligosaccharides, glycoproteins, glycolipids, colominic acid and synthetic substrates.. Its activity is regulated as follows. Inhibited by the neuraminidase inhibitors zanamivir (Relenza) and oseltamivir (Tamiflu). These drugs interfere with the release of progeny virus from infected cells and are effective against all influenza strains. Resistance to neuraminidase inhibitors is quite rare. Catalyzes the removal of terminal sialic acid residues from viral and cellular glycoconjugates. Cleaves off the terminal sialic acids on the glycosylated HA during virus budding to facilitate virus release. Additionally helps virus spread through the circulation by further removing sialic acids from the cell surface. These cleavages prevent self-aggregation and ensure the efficient spread of the progeny virus from cell to cell. Otherwise, infection would be limited to one round of replication. Described as a receptor-destroying enzyme because it cleaves a terminal sialic acid from the cellular receptors. May facilitate viral invasion of the upper airways by cleaving the sialic acid moieties on the mucin of the airway epithelial cells. Likely to plays a role in the budding process through its association with lipid rafts during intracellular transport. May additionally display a raft-association independent effect on budding. Plays a role in the determination of host range restriction on replication and virulence. Sialidase activity in late endosome/lysosome traffic seems to enhance virus replication. In Aves, this protein is Neuraminidase.